The sequence spans 189 residues: Peptidyl-tRNA hydrolase (189 aa).

A tRNA-binding site is contributed by tyrosine 14. Residue histidine 19 is the Proton acceptor of the active site. Tyrosine 64, asparagine 66, and asparagine 112 together coordinate tRNA.

It belongs to the PTH family. Monomer.

It is found in the cytoplasm. It catalyses the reaction an N-acyl-L-alpha-aminoacyl-tRNA + H2O = an N-acyl-L-amino acid + a tRNA + H(+). Its function is as follows. Hydrolyzes ribosome-free peptidyl-tRNAs (with 1 or more amino acids incorporated), which drop off the ribosome during protein synthesis, or as a result of ribosome stalling. In terms of biological role, catalyzes the release of premature peptidyl moieties from peptidyl-tRNA molecules trapped in stalled 50S ribosomal subunits, and thus maintains levels of free tRNAs and 50S ribosomes. The polypeptide is Peptidyl-tRNA hydrolase (Clostridium botulinum (strain ATCC 19397 / Type A)).